A 103-amino-acid polypeptide reads, in one-letter code: Conantokin-Br (103 aa).

The first 21 residues, 1–21 (MQLYTYLYLLVPLVTFHLILG), serve as a signal peptide directing secretion. A propeptide spanning residues 22–79 (TGTLDHGGALTERRSTDATALKPEPVLQKSAARSTDDNGKDRLTQMKRILKKRGKNAR) is cleaved from the precursor. Residues 34-64 (RRSTDATALKPEPVLQKSAARSTDDNGKDRL) form a disordered region. Residues 55-64 (STDDNGKDRL) are compositionally biased toward basic and acidic residues. A 4-carboxyglutamate mark is found at E82, E83, E89, and E93. 2 residues coordinate a divalent metal cation: E89 and E93.

This sequence belongs to the conotoxin B superfamily. Ca(2+) serves as cofactor. Mg(2+) is required as a cofactor. Expressed by the venom duct.

It localises to the secreted. Conantokins inhibit N-methyl-D-aspartate (NMDA) receptors. This toxin inhibits NR2 subunits N-methyl-D-aspartate (NMDA) receptor-mediated calcium influx in central nervous system neurons in the following order of preference: NR2B/GRIN2B (IC(50)=0.14 uM), NR2D/GRIN2D (IC(50)=0.31 uM), NR2A/GRIN2A (IC(50)=0.68 uM) and NR2C/GRIN2A (IC(50)=4.9 uM), when tested on rat receptors. This is Conantokin-Br from Conus sulcatus (Sulcate cone).